Reading from the N-terminus, the 293-residue chain is MTDTTRSLRDCLAPAKLNLFLHITGRRPDGYHELQSVFQLLDWGDRLHFTLRDDGKVSRKTDVPGVPEETDLIVRAASLLKAHTGTAAGVDIEIDKRLPMGAGLGGGSSDAATTLLALNRLWKLDLPRATLQSLAVKLGADVPFFVFGKNAFAEGIGEALQAVELPTRWFLVVTPRVHVPTAAIFSEKSLTRDSKPITITDFLAQQDCNTGWPDSFGRNDMQPVVTSKYAEVAKVVGWFYNLTPARMTGSGASVFAAFKSKAEAGAAQAQLPAGWDSAVAESLGEHPLFAFAS.

Lys-16 is an active-site residue. 99–109 lines the ATP pocket; sequence PMGAGLGGGSS. The active site involves Asp-141.

The protein belongs to the GHMP kinase family. IspE subfamily.

The catalysed reaction is 4-CDP-2-C-methyl-D-erythritol + ATP = 4-CDP-2-C-methyl-D-erythritol 2-phosphate + ADP + H(+). Its pathway is isoprenoid biosynthesis; isopentenyl diphosphate biosynthesis via DXP pathway; isopentenyl diphosphate from 1-deoxy-D-xylulose 5-phosphate: step 3/6. Functionally, catalyzes the phosphorylation of the position 2 hydroxy group of 4-diphosphocytidyl-2C-methyl-D-erythritol. The chain is 4-diphosphocytidyl-2-C-methyl-D-erythritol kinase from Burkholderia thailandensis (strain ATCC 700388 / DSM 13276 / CCUG 48851 / CIP 106301 / E264).